A 551-amino-acid chain; its full sequence is Protein ROOT HAIR SPECIFIC 17 (551 aa).

The helical; Signal-anchor for type II membrane protein transmembrane segment at 39–59 threads the bilayer; that stretch reads LFPLVSAVSGCLLLILFSFST. N-linked (GlcNAc...) asparagine glycans are attached at residues Asn109 and Asn153. 293-295 lines the substrate pocket; it reads HLR. 2 N-linked (GlcNAc...) asparagine glycosylation sites follow: Asn405 and Asn465. Residues 515 to 539 are disordered; it reads KAKHVNEDDSSEYSEIGNVPISSRS.

Belongs to the glycosyltransferase GT106 family. Specifically expressed in the root hair.

The protein localises to the membrane. The protein operates within glycan metabolism. This chain is Protein ROOT HAIR SPECIFIC 17, found in Arabidopsis thaliana (Mouse-ear cress).